The sequence spans 872 residues: Extended synaptotagmin-2-A (872 aa).

The tract at residues 1-25 is disordered; that stretch reads MSSESSAEKGPPPSPAENVQPGVPP. Residues 1–31 are Cytoplasmic-facing; the sequence is MSSESSAEKGPPPSPAENVQPGVPPAAEEPG. Residues 32 to 52 traverse the membrane as a helical segment; that stretch reads MISVDIAGLFYQFSKTFILIF. Topologically, residues 53 to 55 are lumenal; it reads PVY. Residues 56–76 form a helical membrane-spanning segment; it reads VLGYFGLSFSWLLIALVLLLW. At 77–872 the chain is on the cytoplasmic side; the sequence is WRRNKGNKNS…EDGTRPAVSS (796 aa). In terms of domain architecture, SMP-LTD spans 119 to 298; sequence DIERAEWLNK…LPNRITVPLV (180 aa). C2 domains follow at residues 297 to 417 and 442 to 588; these read LVSD…DEWF and NLDQ…HLNN. Lys328, Asp329, Asp341, Asp388, Glu389, Asp390, Asp392, Asp394, and Asp395 together coordinate Ca(2+). The segment covering 608-617 has biased composition (basic and acidic residues); sequence KPVRSPDEQH. Residues 608–711 form a disordered region; that stretch reads KPVRSPDEQH…EPTPSIASDI (104 aa). Residues 632 to 652 show a composition bias toward pro residues; it reads PPTPQMPSPSPAVAHKPPPTP. The segment covering 664 to 681 has biased composition (polar residues); that stretch reads NKGTPPSASPKSPTELHQ. The segment covering 682-696 has biased composition (low complexity); sequence SSSSLSGSSFTYSPS. Residues 737–859 form the C2 3 domain; the sequence is PLGQIQLTIR…DAAKGWTQWY (123 aa). The required for phosphatidylinositol 4,5-bisphosphate-dependent location at the cell membrane stretch occupies residues 784 to 791; sequence KRRSGRRK.

The protein belongs to the extended synaptotagmin family. Interacts with fgfr1 that has been activated by fgf1 binding. Interacts (via C2 domains) with the AP-2 complex (via an alpha subunit). Identified in a complex with the AP-2 complex and fgfr1.

It is found in the cell membrane. It localises to the endoplasmic reticulum membrane. Its function is as follows. Tethers the endoplasmic reticulum to the cell membrane and promotes the formation of appositions between the endoplasmic reticulum and the cell membrane. Binds glycerophospholipids in a barrel-like domain and may play a role in cellular lipid transport. Plays a role in the rapid internalization of fgfr1 that has been activated by fgf1 binding; this occurs most likely via the AP-2 complex. Required for normal fgf signaling and the activation of downstream signaling cascades via its role in the internalization of activated fgfr1. Required for normal embryonic development via its role in fgf signaling and the downstream regulation of t/xBRA expression. This Xenopus laevis (African clawed frog) protein is Extended synaptotagmin-2-A (esyt2-a).